Here is a 1372-residue protein sequence, read N- to C-terminus: Collagen alpha-2(I) chain (1372 aa).

An N-terminal signal peptide occupies residues 1-22 (MLSFVDTRTLLLLAVTSCLATC). The residue at position 23 (Q23) is a Pyrrolidone carboxylic acid. The propeptide at 23-85 (QYLQSGSVRK…PPGLTGNFAA (63 aa)) is N-terminal propeptide. The segment at 28 to 1135 (GSVRKGPTGD…DQPRSQPSLR (1108 aa)) is disordered. Over residues 59–77 (MGPPGPPGSPGPPGSPAPP) the composition is skewed to pro residues. An Allysine modification is found at K90. Residues 95 to 146 (GPGPMGLMGPRGPPGAVGAPGPQGFQGPAGEPGEPGQTGPAGPRGPAGSPGK) are compositionally biased toward low complexity. Residues 147 to 161 (AGEDGHPGKPGRPGE) show a composition bias toward basic and acidic residues. K183 carries the post-translational modification 5-hydroxylysine; alternate. K183 is a glycosylation site (O-linked (Gal...) hydroxylysine; alternate). Composition is skewed to low complexity over residues 231–260 (VGAP…SAGP), 285–299 (AGPR…LSGP), 306–327 (PGTN…AGAP), 336–351 (PGPA…RGLV), 390–416 (PGEA…LPGA), 476–495 (LPGI…RGEA), and 519–537 (PGLA…NGAQ). Gly residues predominate over residues 544–553 (GVQGGKGEQG). Over residues 600 to 639 (PGESGAAGPSGPIGSRGPSGAPGPDGNKGEAGAVGAPGSA) the composition is skewed to low complexity. Over residues 640–649 (GASGPGGLPG) the composition is skewed to gly residues. 2 stretches are compositionally biased toward low complexity: residues 681 to 716 (RGIP…PRGS) and 725 to 743 (PAGP…QPGA). Positions 744-753 (KGEKGTKGPK) are enriched in basic and acidic residues. Positions 755–771 (ENGIVGPTGSVGAAGPS) are enriched in low complexity. Residues 781–790 (GSRGDGGPPG) are compositionally biased toward gly residues. Low complexity-rich tracts occupy residues 792 to 801 (TGFPGAAGRT), 855 to 882 (SGEP…LGLP), 905 to 927 (ISGP…NGAP), 957 to 978 (PGSI…VGPA), and 987 to 1007 (PGPA…PSGP). Over residues 1011-1022 (RGDKGEPGDKGH) the composition is skewed to basic and acidic residues. Residues 1095 to 1107 (AGPPGPPGPPGPP) show a composition bias toward pro residues. The propeptide at 1126–1372 (DQPRSQPSLR…RVEVGPVCFK (247 aa)) is C-terminal propeptide. Residues 1139–1372 (YEVDATLKSL…RVEVGPVCFK (234 aa)) enclose the Fibrillar collagen NC1 domain. 3 cysteine pairs are disulfide-bonded: C1169–C1201, C1209–C1370, and C1278–C1323. The Ca(2+) site is built by D1187, N1189, Q1190, C1192, and D1195. N1273 carries an N-linked (GlcNAc...) asparagine glycan.

It belongs to the fibrillar collagen family. As to quaternary structure, trimers of one alpha 2(I) and two alpha 1(I) chains. Interacts (via C-terminus) with TMEM131 (via PapD-L domain); the interaction is direct and is involved in assembly and TRAPPIII ER-to-Golgi transport complex-dependent secretion of collagen. Post-translationally, prolines at the third position of the tripeptide repeating unit (G-X-Y) are hydroxylated in some or all of the chains. As to expression, expressed in kidney glomeruli.

Its subcellular location is the secreted. The protein localises to the extracellular space. It localises to the extracellular matrix. Functionally, type I collagen is a member of group I collagen (fibrillar forming collagen). The polypeptide is Collagen alpha-2(I) chain (Col1a2) (Mus musculus (Mouse)).